The sequence spans 220 residues: Putative cobalt transport protein CbiM (220 aa).

6 consecutive transmembrane segments (helical) span residues 6 to 26 (GFLP…VISY), 45 to 65 (IAVA…SVTG), 74 to 94 (GIAV…IVLL), 107 to 127 (TLGA…WVVF), 153 to 173 (LVTS…AGVV), and 188 to 208 (IPIG…IAMS).

The protein belongs to the CbiM family. In terms of assembly, forms an energy-coupling factor (ECF) transporter complex composed of an ATP-binding protein (A component, CbiO), a transmembrane protein (T component, CbiQ) and 2 possible substrate-capture proteins (S components, CbiM and CbiN) of unknown stoichimetry.

Its subcellular location is the cell membrane. The protein operates within cofactor biosynthesis; adenosylcobalamin biosynthesis. Part of the energy-coupling factor (ECF) transporter complex CbiMNOQ involved in cobalt import. The polypeptide is Putative cobalt transport protein CbiM (Halobacterium salinarum (strain ATCC 29341 / DSM 671 / R1)).